The chain runs to 291 residues: 4-hydroxy-tetrahydrodipicolinate synthase (291 aa).

T44 serves as a coordination point for pyruvate. Residue Y132 is the Proton donor/acceptor of the active site. The Schiff-base intermediate with substrate role is filled by K161. Pyruvate is bound at residue I202.

This sequence belongs to the DapA family. Homotetramer; dimer of dimers.

It localises to the cytoplasm. It catalyses the reaction L-aspartate 4-semialdehyde + pyruvate = (2S,4S)-4-hydroxy-2,3,4,5-tetrahydrodipicolinate + H2O + H(+). It functions in the pathway amino-acid biosynthesis; L-lysine biosynthesis via DAP pathway; (S)-tetrahydrodipicolinate from L-aspartate: step 3/4. In terms of biological role, catalyzes the condensation of (S)-aspartate-beta-semialdehyde [(S)-ASA] and pyruvate to 4-hydroxy-tetrahydrodipicolinate (HTPA). This is 4-hydroxy-tetrahydrodipicolinate synthase from Endomicrobium trichonymphae.